We begin with the raw amino-acid sequence, 319 residues long: MRKLAVLTSGGDSPGMNAAVRAAVRRAHFHEVQMFGVYHGYEGLMRGDIKEMSLGSVGDIIQRGGTILYSARSEAFKTEAGQQRAVEQLRAHEIEGLIVIGGDGSFRGAQKLTEKGFPTIGVPGTIDNDIPCTDFTIGFDTALNTVVEAIDKIRDTATSHERTYIIEVMGRDAGDLALWAGLAAGAESIMIPEASQDMDDIIERLHAGQRRGKKHSIIIVAEGVGSAASYAEAITKETGWETRVTVLGHIQRGGSPTAMDRMLASRMGAAAVDLLLEGKQDRMVGVQNNQIVDVDFQEALAKKHQLDLSIYQLARTLSI.

Position 11 (G11) interacts with ATP. 21-25 (RAAVR) contacts ADP. Residues 72–73 (RS) and 102–105 (GDGS) each bind ATP. Residue D103 participates in Mg(2+) binding. Residue 125–127 (TID) participates in substrate binding. Residue D127 is the Proton acceptor of the active site. R154 is a binding site for ADP. Substrate contacts are provided by residues R162 and 169–171 (MGR). Residues 185–187 (GAE), R211, and 213–215 (KKH) contribute to the ADP site. Substrate-binding positions include E222, R243, and 249 to 252 (HIQR).

The protein belongs to the phosphofructokinase type A (PFKA) family. ATP-dependent PFK group I subfamily. Prokaryotic clade 'B1' sub-subfamily. As to quaternary structure, homotetramer. It depends on Mg(2+) as a cofactor.

The protein localises to the cytoplasm. It carries out the reaction beta-D-fructose 6-phosphate + ATP = beta-D-fructose 1,6-bisphosphate + ADP + H(+). The protein operates within carbohydrate degradation; glycolysis; D-glyceraldehyde 3-phosphate and glycerone phosphate from D-glucose: step 3/4. Allosterically activated by ADP and other diphosphonucleosides, and allosterically inhibited by phosphoenolpyruvate. In terms of biological role, catalyzes the phosphorylation of D-fructose 6-phosphate to fructose 1,6-bisphosphate by ATP, the first committing step of glycolysis. The chain is ATP-dependent 6-phosphofructokinase from Brevibacillus brevis (strain 47 / JCM 6285 / NBRC 100599).